The following is a 245-amino-acid chain: Ubiquinone/menaquinone biosynthesis C-methyltransferase UbiE (245 aa).

S-adenosyl-L-methionine-binding positions include Thr71, Asp92, and 118 to 119; that span reads DA.

Belongs to the class I-like SAM-binding methyltransferase superfamily. MenG/UbiE family.

The catalysed reaction is a 2-demethylmenaquinol + S-adenosyl-L-methionine = a menaquinol + S-adenosyl-L-homocysteine + H(+). It carries out the reaction a 2-methoxy-6-(all-trans-polyprenyl)benzene-1,4-diol + S-adenosyl-L-methionine = a 5-methoxy-2-methyl-3-(all-trans-polyprenyl)benzene-1,4-diol + S-adenosyl-L-homocysteine + H(+). It participates in quinol/quinone metabolism; menaquinone biosynthesis; menaquinol from 1,4-dihydroxy-2-naphthoate: step 2/2. The protein operates within cofactor biosynthesis; ubiquinone biosynthesis. In terms of biological role, methyltransferase required for the conversion of demethylmenaquinol (DMKH2) to menaquinol (MKH2) and the conversion of 2-polyprenyl-6-methoxy-1,4-benzoquinol (DDMQH2) to 2-polyprenyl-3-methyl-6-methoxy-1,4-benzoquinol (DMQH2). This chain is Ubiquinone/menaquinone biosynthesis C-methyltransferase UbiE, found in Neisseria meningitidis serogroup C / serotype 2a (strain ATCC 700532 / DSM 15464 / FAM18).